The primary structure comprises 692 residues: MMRPVVVKEKQIHVVEDEVRQAKTMDRDIVKHAMKQSVAKLNPKVMIKNPIMFVVEIGFVITFILSFLPSHSSSIPGWFNITVSLILLFTVLFANFAEALAEGRGKAQADSLKQSKKDVFANVVKENGEIVQVSATDLRKDDVVIVKQGEMIPSDGEVIKGLASVDESAITGESAPVIKEAGGDFCSVTGGTMVVSDEITIVITSNPGESFIDKMISLVEGAARQKTPNEIALNTVLTSLTLIFLIVVVTLPIFTNYLGFQIDTAVLVALLVCLIPTTIGGLLSAIGIAGMDRVTKFNVLAMSGKAVEAAGDINTIILDKTGTITFGNRMAHTLLPVGNETIEQVGKWAAISSVLDETPEGRSVIEYVQAKSISYNRELAEQGEFIPFKAETRMSGVDLQDGTKVRKGAVGSVIEWVRSQGGTIPKDVNQKADFISKEGGTPLVVAVDNRIYGLIYLKDTVKPGMRERFEQLRQMGIKTVMCTGDNPLTAATIAKEAGVDEFVAECKPEDKIAVIKAEQDKGKLVAMTGDGTNDAPALAQADVGLAMNSGTTAAKEAANMIDLDSNPTKIIEVVGIGKQLLMTRGALTTFSIANDIAKYFAIIPAMFTLAIPQMEALNIMKLTSPLSAILSALLFNAVIIPLLIPLAMKGIAYKPMSSNALLGRNLLIYGLGGVIVPFIGIKIIDMIVGLFI.

4 helical membrane passes run 50-70 (PIMFVVEIGFVITFILSFLPS), 74-94 (SIPGWFNITVSLILLFTVLFA), 240-260 (LTLIFLIVVVTLPIFTNYLGF), and 266-286 (VLVALLVCLIPTTIGGLLSAI). Asp-319 serves as the catalytic 4-aspartylphosphate intermediate. Residues Asp-356, Glu-360, 388–395 (FKAETRMS), and Lys-407 contribute to the ATP site. Residues Asp-530 and Asp-534 each coordinate Mg(2+). Helical transmembrane passes span 600-620 (FAIIPAMFTLAIPQMEALNIM), 628-648 (AILSALLFNAVIIPLLIPLAM), and 672-692 (GGVIVPFIGIKIIDMIVGLFI).

The protein belongs to the cation transport ATPase (P-type) (TC 3.A.3) family. Type IA subfamily. As to quaternary structure, the system is composed of three essential subunits: KdpA, KdpB and KdpC.

It localises to the cell membrane. The enzyme catalyses K(+)(out) + ATP + H2O = K(+)(in) + ADP + phosphate + H(+). Functionally, part of the high-affinity ATP-driven potassium transport (or Kdp) system, which catalyzes the hydrolysis of ATP coupled with the electrogenic transport of potassium into the cytoplasm. This subunit is responsible for energy coupling to the transport system and for the release of the potassium ions to the cytoplasm. This Bacillus thuringiensis (strain Al Hakam) protein is Potassium-transporting ATPase ATP-binding subunit.